The following is a 286-amino-acid chain: Shikimate dehydrogenase (NADP(+)) (286 aa).

Shikimate is bound by residues 20–22 (SLS) and S67. Catalysis depends on K71, which acts as the Proton acceptor. Shikimate contacts are provided by N92 and D107. Residues 131-135 (GGGGA) and A230 each bind NADP(+). Y232 contacts shikimate. G253 serves as a coordination point for NADP(+).

It belongs to the shikimate dehydrogenase family. Homodimer.

It catalyses the reaction shikimate + NADP(+) = 3-dehydroshikimate + NADPH + H(+). It functions in the pathway metabolic intermediate biosynthesis; chorismate biosynthesis; chorismate from D-erythrose 4-phosphate and phosphoenolpyruvate: step 4/7. Functionally, involved in the biosynthesis of the chorismate, which leads to the biosynthesis of aromatic amino acids. Catalyzes the reversible NADPH linked reduction of 3-dehydroshikimate (DHSA) to yield shikimate (SA). The sequence is that of Shikimate dehydrogenase (NADP(+)) from Lactococcus lactis subsp. cremoris (strain SK11).